The primary structure comprises 351 residues: Protein-glutamate methylesterase/protein-glutamine glutaminase 2 (351 aa).

The Response regulatory domain maps to 5-122; it reads RVICVDDSAL…RDGLLDYSEL (118 aa). Asp-56 bears the 4-aspartylphosphate mark. Positions 154–341 constitute a CheB-type methylesterase domain; the sequence is LNSSEKLVIL…PLPAMSERIL (188 aa). Catalysis depends on residues Ser-166, His-192, and Asp-289.

Belongs to the CheB family. In terms of processing, phosphorylated by CheA. Phosphorylation of the N-terminal regulatory domain activates the methylesterase activity.

The protein localises to the cytoplasm. It carries out the reaction [protein]-L-glutamate 5-O-methyl ester + H2O = L-glutamyl-[protein] + methanol + H(+). The enzyme catalyses L-glutaminyl-[protein] + H2O = L-glutamyl-[protein] + NH4(+). Functionally, involved in chemotaxis. Part of a chemotaxis signal transduction system that modulates chemotaxis in response to various stimuli. Catalyzes the demethylation of specific methylglutamate residues introduced into the chemoreceptors (methyl-accepting chemotaxis proteins or MCP) by CheR. Also mediates the irreversible deamidation of specific glutamine residues to glutamic acid. The chain is Protein-glutamate methylesterase/protein-glutamine glutaminase 2 from Bordetella avium (strain 197N).